The following is a 127-amino-acid chain: PanD regulatory factor (127 aa).

In terms of domain architecture, N-acetyltransferase spans 1–127; it reads MKLTIIRLEK…TAQQGGWEKC (127 aa). Interaction with PanD stretches follow at residues 43–48 and 66–76; these read RFNERL and LRVREVTRRRG. Residues 66-68 and 72-79 contribute to the CoA site; these read LRV and TRRRGVGQ.

The protein belongs to the PanZ/PanM family. As to quaternary structure, interacts with PanD in the presence of CoA. Forms a heterooctameric complex composed of four PanD subunits and four PanZ subunits. Monomer in solution.

Activation of PanD processing occurs even at low CoA concentrations. In contrast, full inhibition of PanD catalytic activity only occurs at sufficiently high CoA concentrations. Controls both the activation and catalytic activity of PanD in a coenzyme A (CoA)-dependent fashion. Binding of CoA or a derivative to PanZ leads to interaction with PanD, which promotes the processing and activation of pro-PanD, and subsequent substrate-mediated inhibition of the active form of PanD. Inhibition of PanD activity is probably the primary metabolic role of PanZ, allowing negative feedback regulation of pantothenate biosynthesis by CoA. The protein is PanD regulatory factor of Escherichia coli (strain K12).